We begin with the raw amino-acid sequence, 405 residues long: Replication factor C large subunit (405 aa).

An ATP-binding site is contributed by 47–54; sequence GPPGVGKT.

This sequence belongs to the activator 1 small subunits family. RfcL subfamily. In terms of assembly, heteropentamer composed of four small subunits (RfcS) and one large subunit (RfcL). Probably interacts with PCNA subunit PCNA3.

Functionally, part of the RFC clamp loader complex which loads the PCNA sliding clamp onto DNA. The complex possesses DNA-dependent ATPase activity. This Saccharolobus solfataricus (strain ATCC 35092 / DSM 1617 / JCM 11322 / P2) (Sulfolobus solfataricus) protein is Replication factor C large subunit (rfcL).